Here is a 380-residue protein sequence, read N- to C-terminus: Cytochrome b (380 aa).

Helical transmembrane passes span 34–54, 78–99, 114–134, and 179–199; these read FGSLLGICLMTQILTGLLLAM, WLIRNLHANGASFFFICIYLHI, WNTGIILLLTLMATAFVGYVL, and FFALHFLLPFAIAGLTLIHLT. Positions 84 and 98 each coordinate heme b. Heme b contacts are provided by His-183 and His-197. His-202 is a binding site for a ubiquinone. The next 4 helical transmembrane spans lie at 227-247, 289-309, 321-341, and 348-368; these read LKDILGFTLMFLPLTSLALFS, LGGVLALAASVLILFLSPFLH, LSQLLFWILVTNLFILTWVGS, and FIIIGQLASITYFTILLILFP.

This sequence belongs to the cytochrome b family. In terms of assembly, the cytochrome bc1 complex contains 11 subunits: 3 respiratory subunits (MT-CYB, CYC1 and UQCRFS1), 2 core proteins (UQCRC1 and UQCRC2) and 6 low-molecular weight proteins (UQCRH/QCR6, UQCRB/QCR7, UQCRQ/QCR8, UQCR10/QCR9, UQCR11/QCR10 and a cleavage product of UQCRFS1). This cytochrome bc1 complex then forms a dimer. Heme b is required as a cofactor.

It is found in the mitochondrion inner membrane. Functionally, component of the ubiquinol-cytochrome c reductase complex (complex III or cytochrome b-c1 complex) that is part of the mitochondrial respiratory chain. The b-c1 complex mediates electron transfer from ubiquinol to cytochrome c. Contributes to the generation of a proton gradient across the mitochondrial membrane that is then used for ATP synthesis. The sequence is that of Cytochrome b (MT-CYB) from Daption capense (Cape petrel).